Here is a 392-residue protein sequence, read N- to C-terminus: N-acetylneuraminate epimerase (392 aa).

Residues 1–35 (MTQLYPQYKKQLTTKIVLFSALSLLMMASLPNTYA) form the signal peptide. Kelch repeat units follow at residues 56-100 (SLYV…VVLA), 102-155 (KLYV…TTLD), 157-192 (SQAVLLGGVNKAIFDGYFTDLASAGSDEVRKSAVIN), 193-238 (AYFN…SRMD), 241-290 (LILI…LAGA), 312-361 (KQFN…QGPD), and 363-392 (VILIGGETTGGTATSAVTQLSWQGGKLHIE). The active-site Proton acceptor is Glu247.

This sequence belongs to the NanM family. As to quaternary structure, homodimer.

It is found in the periplasm. The catalysed reaction is N-acetyl-alpha-neuraminate = N-acetyl-beta-neuraminate. Converts alpha-N-acetylneuranimic acid (Neu5Ac) to the beta-anomer, accelerating the equilibrium between the alpha- and beta-anomers. Probably facilitates sialidase-negative bacteria to compete successfully for limited amounts of extracellular Neu5Ac, which is likely taken up in the beta-anomer. In addition, the rapid removal of sialic acid from solution might be advantageous to the bacterium to damp down host responses. In Yersinia pseudotuberculosis serotype O:1b (strain IP 31758), this protein is N-acetylneuraminate epimerase.